Here is a 145-residue protein sequence, read N- to C-terminus: Cytochrome b (145 aa).

The helical transmembrane segment at 38 to 58 (FFALHFLLPFVLAALALMHLI) threads the bilayer. The heme b site is built by histidine 42 and histidine 56. Histidine 61 contributes to the a ubiquinone binding site. Residues 85–105 (FIFKDLVTIFIFFIVLSIFVF) form a helical membrane-spanning segment.

The protein belongs to the cytochrome b family. Fungal cytochrome b-c1 complex contains 10 subunits; 3 respiratory subunits, 2 core proteins and 5 low-molecular weight proteins. Cytochrome b-c1 complex is a homodimer. Heme b is required as a cofactor.

The protein resides in the mitochondrion inner membrane. Component of the ubiquinol-cytochrome c reductase complex (complex III or cytochrome b-c1 complex) that is part of the mitochondrial respiratory chain. The b-c1 complex mediates electron transfer from ubiquinol to cytochrome c. Contributes to the generation of a proton gradient across the mitochondrial membrane that is then used for ATP synthesis. The protein is Cytochrome b (cob) of Aspergillus flavus.